We begin with the raw amino-acid sequence, 142 residues long: AP-2 complex subunit sigma (142 aa).

This sequence belongs to the adaptor complexes small subunit family. As to quaternary structure, adaptor protein complex 2 (AP-2) is a heterotetramer composed of two large adaptins (alpha-type and beta-type subunits), a medium adaptin (mu-type subunit) and a small adaptin (sigma-type subunit).

Its subcellular location is the cell membrane. The protein localises to the membrane. It is found in the coated pit. Functionally, subunit of the adaptor protein complex 2 (AP-2). Adaptor protein complexes function in protein transport via transport vesicles in different membrane traffic pathways. Adaptor protein complexes are vesicle coat components and appear to be involved in cargo selection and vesicle formation. AP-2 is involved in clathrin-dependent endocytosis in which cargo proteins are incorporated into vesicles surrounded by clathrin (clathrin-coated vesicles, CCVs) which are destined for fusion with the early endosome. The complex binds polyphosphoinositides. This Arabidopsis thaliana (Mouse-ear cress) protein is AP-2 complex subunit sigma (AP17).